We begin with the raw amino-acid sequence, 281 residues long: Undecaprenyl-diphosphatase (281 aa).

The next 8 helical transmembrane spans lie at 4 to 24 (IEIL…WLPI), 45 to 65 (AFMS…VMVI), 89 to 109 (WLKV…DDWF), 113 to 133 (FHNM…FIYL), 152 to 172 (LPYT…LPGT), 190 to 210 (SVVT…ASAL), 225 to 245 (GQLF…MVAI), and 257 to 277 (FTLF…YSFV).

The protein belongs to the UppP family.

It localises to the cell membrane. It carries out the reaction di-trans,octa-cis-undecaprenyl diphosphate + H2O = di-trans,octa-cis-undecaprenyl phosphate + phosphate + H(+). Catalyzes the dephosphorylation of undecaprenyl diphosphate (UPP). Confers resistance to bacitracin. The chain is Undecaprenyl-diphosphatase from Streptococcus pneumoniae (strain Hungary19A-6).